The sequence spans 716 residues: Leucine-rich repeat neuronal protein 1 (716 aa).

The first 25 residues, 1–25 (MARMSFVIAACQLVLGLLMTSLTES), serve as a signal peptide directing secretion. The region spanning 26 to 72 (SIQNSECPQLCVCEIRPWFTPQSTYREATTVDCNDLRLTRIPSNLSS) is the LRRNT domain. Topologically, residues 26–631 (SIQNSECPQL…DISDQETSTA (606 aa)) are extracellular. LRR repeat units lie at residues 73–95 (DTQV…QQLF), 96–117 (NLTE…GLAN), 120–141 (QLTT…CLQD), 144–165 (NLQE…AFAG), 168–189 (NLLR…WFDS), 192–213 (NLEI…NFKP), 216–237 (NLRS…ALVG), 240–261 (SLES…ALQK), 264–285 (NLKF…DFKN), 313–335 (ELTK…AFRS), and 338–359 (ALES…TVES). Residues asparagine 96 and asparagine 117 are each glycosylated (N-linked (GlcNAc...) asparagine). The 54-residue stretch at 371–424 (NPLRCDCVIHWINSNKTNIRFMEPLSMFCAMPPEYKGHQVKEVLIQDSSEQCLP) folds into the LRRCT domain. Residue asparagine 385 is glycosylated (N-linked (GlcNAc...) asparagine). The Ig-like C2-type domain occupies 424–515 (PMISHDSFPN…GADTRVATIK (92 aa)). A disulfide bond links cysteine 447 and cysteine 499. The N-linked (GlcNAc...) asparagine glycan is linked to asparagine 517. Positions 525–617 (QVLKIYVKQT…SCVNVTTKNA (93 aa)) constitute a Fibronectin type-III domain. The chain crosses the membrane as a helical span at residues 632 to 652 (LAAVMGSMFAVISLASIAVYF). The Cytoplasmic portion of the chain corresponds to 653–716 (AKRFKRKNYH…VDTSRSYYMW (64 aa)). Residues 691 to 700 (DSEKDKDGSA) show a composition bias toward basic and acidic residues. Positions 691 to 716 (DSEKDKDGSADTKPTQVDTSRSYYMW) are disordered. A compositionally biased stretch (polar residues) spans 702-716 (TKPTQVDTSRSYYMW).

The protein resides in the membrane. This is Leucine-rich repeat neuronal protein 1 (LRRN1) from Homo sapiens (Human).